The chain runs to 256 residues: Peroxisomal membrane protein PMP30B (256 aa).

Belongs to the peroxin-11 family.

Its subcellular location is the peroxisome membrane. In terms of biological role, involved in peroxisomal proliferation. Could participate in peroxisomal elongation or fission. May be involved in parceling of peroxisomes into regular quanta. The polypeptide is Peroxisomal membrane protein PMP30B (PEX11B) (Candida boidinii (Yeast)).